Consider the following 593-residue polypeptide: Proteasome-associated ATPase (593 aa).

A coiled-coil region spans residues 5–94 (DDADSRAARW…KEEIDRLAQP (90 aa)). Position 281-286 (281-286 (GCGKTL)) interacts with ATP. The disordered stretch occupies residues 574–593 (GKGADAGRSIETASNTGQYL). The segment covering 584-593 (ETASNTGQYL) has biased composition (polar residues). The segment at 592-593 (YL) is docks into pockets in the proteasome alpha-ring.

It belongs to the AAA ATPase family. As to quaternary structure, homohexamer. Assembles into a hexameric ring structure that caps the 20S proteasome core. Strongly interacts with the prokaryotic ubiquitin-like protein Pup through a hydrophobic interface; the interacting region of ARC lies in its N-terminal coiled-coil domain. There is one Pup binding site per ARC hexamer ring. Upon ATP-binding, the C-terminus of ARC interacts with the alpha-rings of the proteasome core, possibly by binding to the intersubunit pockets.

The protein operates within protein degradation; proteasomal Pup-dependent pathway. In terms of biological role, ATPase which is responsible for recognizing, binding, unfolding and translocation of pupylated proteins into the bacterial 20S proteasome core particle. May be essential for opening the gate of the 20S proteasome via an interaction with its C-terminus, thereby allowing substrate entry and access to the site of proteolysis. Thus, the C-termini of the proteasomal ATPase may function like a 'key in a lock' to induce gate opening and therefore regulate proteolysis. This chain is Proteasome-associated ATPase, found in Salinispora tropica (strain ATCC BAA-916 / DSM 44818 / JCM 13857 / NBRC 105044 / CNB-440).